An 86-amino-acid chain; its full sequence is uncharacterized protein (86 aa).

This is an uncharacterized protein from Haemophilus influenzae (strain ATCC 51907 / DSM 11121 / KW20 / Rd).